Consider the following 213-residue polypeptide: GTP cyclohydrolase 1 (213 aa).

Zn(2+) is bound by residues cysteine 104, histidine 107, and cysteine 175.

This sequence belongs to the GTP cyclohydrolase I family. In terms of assembly, toroid-shaped homodecamer, composed of two pentamers of five dimers.

The enzyme catalyses GTP + H2O = 7,8-dihydroneopterin 3'-triphosphate + formate + H(+). The protein operates within cofactor biosynthesis; 7,8-dihydroneopterin triphosphate biosynthesis; 7,8-dihydroneopterin triphosphate from GTP: step 1/1. This is GTP cyclohydrolase 1 from Brucella abortus (strain 2308).